A 312-amino-acid chain; its full sequence is Dihydroorotate dehydrogenase B (NAD(+)), catalytic subunit (312 aa).

Residues Ser23 and 47–48 each bind FMN; that span reads KA. Residues Lys47 and 71–75 contribute to the substrate site; that span reads NAIGL. FMN-binding residues include Asn102 and Asn130. Asn130 contributes to the substrate binding site. Cys133 acts as the Nucleophile in catalysis. Residues Lys168 and Ile194 each coordinate FMN. Position 195–196 (195–196) interacts with substrate; it reads NT. FMN-binding positions include Gly220, 246-247, and 268-269; these read GG and GT.

The protein belongs to the dihydroorotate dehydrogenase family. Type 1 subfamily. As to quaternary structure, heterotetramer of 2 PyrK and 2 PyrD type B subunits. It depends on FMN as a cofactor.

Its subcellular location is the cytoplasm. It carries out the reaction (S)-dihydroorotate + NAD(+) = orotate + NADH + H(+). The protein operates within pyrimidine metabolism; UMP biosynthesis via de novo pathway; orotate from (S)-dihydroorotate (NAD(+) route): step 1/1. Catalyzes the conversion of dihydroorotate to orotate with NAD(+) as electron acceptor. The chain is Dihydroorotate dehydrogenase B (NAD(+)), catalytic subunit (pyrDB) from Enterococcus faecalis (strain ATCC 47077 / OG1RF).